Reading from the N-terminus, the 91-residue chain is Probable Fe(2+)-trafficking protein (91 aa).

The protein belongs to the Fe(2+)-trafficking protein family.

Functionally, could be a mediator in iron transactions between iron acquisition and iron-requiring processes, such as synthesis and/or repair of Fe-S clusters in biosynthetic enzymes. This Paraburkholderia phymatum (strain DSM 17167 / CIP 108236 / LMG 21445 / STM815) (Burkholderia phymatum) protein is Probable Fe(2+)-trafficking protein.